Reading from the N-terminus, the 307-residue chain is Ornithine carbamoyltransferase (307 aa).

Residues Ser-56–Thr-59, Gln-83, Arg-107, and His-134–Gln-137 each bind carbamoyl phosphate. L-ornithine is bound by residues Asn-165, Asp-223, and Ser-227–Met-228. Residues Cys-263–Leu-264 and Arg-291 contribute to the carbamoyl phosphate site.

The protein belongs to the aspartate/ornithine carbamoyltransferase superfamily. OTCase family.

It localises to the cytoplasm. The catalysed reaction is carbamoyl phosphate + L-ornithine = L-citrulline + phosphate + H(+). It functions in the pathway amino-acid biosynthesis; L-arginine biosynthesis; L-arginine from L-ornithine and carbamoyl phosphate: step 1/3. Its function is as follows. Reversibly catalyzes the transfer of the carbamoyl group from carbamoyl phosphate (CP) to the N(epsilon) atom of ornithine (ORN) to produce L-citrulline. This chain is Ornithine carbamoyltransferase, found in Cupriavidus metallidurans (strain ATCC 43123 / DSM 2839 / NBRC 102507 / CH34) (Ralstonia metallidurans).